The following is a 180-amino-acid chain: NADH-quinone oxidoreductase subunit I (180 aa).

4Fe-4S ferredoxin-type domains are found at residues 50 to 80 (LTRD…LQKT) and 90 to 119 (EFFR…LTPD). [4Fe-4S] cluster is bound by residues C60, C63, C66, C70, C99, C102, C105, and C109.

It belongs to the complex I 23 kDa subunit family. In terms of assembly, NDH-1 is composed of 13 different subunits. Subunits NuoA, H, J, K, L, M, N constitute the membrane sector of the complex. [4Fe-4S] cluster serves as cofactor.

The protein resides in the cell inner membrane. It carries out the reaction a quinone + NADH + 5 H(+)(in) = a quinol + NAD(+) + 4 H(+)(out). In terms of biological role, NDH-1 shuttles electrons from NADH, via FMN and iron-sulfur (Fe-S) centers, to quinones in the respiratory chain. The immediate electron acceptor for the enzyme in this species is believed to be ubiquinone. Couples the redox reaction to proton translocation (for every two electrons transferred, four hydrogen ions are translocated across the cytoplasmic membrane), and thus conserves the redox energy in a proton gradient. This chain is NADH-quinone oxidoreductase subunit I, found in Shigella dysenteriae serotype 1 (strain Sd197).